We begin with the raw amino-acid sequence, 159 residues long: Large ribosomal subunit protein uL11 (159 aa).

This sequence belongs to the universal ribosomal protein uL11 family. Part of the ribosomal stalk of the 50S ribosomal subunit. Interacts with L10 and the large rRNA to form the base of the stalk. L10 forms an elongated spine to which L12 dimers bind in a sequential fashion forming a multimeric L10(L12)X complex.

Its function is as follows. Forms part of the ribosomal stalk which helps the ribosome interact with GTP-bound translation factors. The sequence is that of Large ribosomal subunit protein uL11 from Methanococcus maripaludis (strain DSM 14266 / JCM 13030 / NBRC 101832 / S2 / LL).